Reading from the N-terminus, the 392-residue chain is SH3 domain-binding protein 5-like (392 aa).

The disordered stretch occupies residues 1–57 (MADLKKAAGGRETPQGELRSEVVEDEGPRSPVAEEPGGSGSNSSETKLSPREEEELD). A Phosphothreonine modification is found at Thr-13. Residues 18-28 (LRSEVVEDEGP) show a composition bias toward basic and acidic residues. 2 positions are modified to phosphoserine: Ser-30 and Ser-49. Coiled-coil stretches lie at residues 59 to 140 (RIQE…YERA) and 169 to 272 (WQEM…EQIH). The interval 275–332 (RRGLPPHPLGPRRSSPVGAEAGPEGIEDGDSGIEGAEGGGLEEGSSLGPGPGPDTDTL) is disordered. The segment covering 317–332 (EGSSLGPGPGPDTDTL) has biased composition (low complexity). 5 positions are modified to phosphoserine: Ser-342, Ser-349, Ser-357, Ser-361, and Ser-377. Residues 364 to 392 (GQELGAQSRGRRGSDIGVRGGRHQRSVSL) form a disordered region. The segment covering 383–392 (GGRHQRSVSL) has biased composition (basic residues).

It belongs to the SH3BP5 family.

Functionally, functions as a guanine nucleotide exchange factor (GEF) for RAB11A. The protein is SH3 domain-binding protein 5-like (Sh3bp5l) of Mus musculus (Mouse).